A 345-amino-acid chain; its full sequence is Anthranilate phosphoribosyltransferase (345 aa).

5-phospho-alpha-D-ribose 1-diphosphate-binding positions include Gly87, 90–91 (GD), Thr95, 97–100 (NAST), 115–123 (KHGNRSFSS), and Ser127. Gly87 contacts anthranilate. Ser99 lines the Mg(2+) pocket. Asn118 is an anthranilate binding site. An anthranilate-binding site is contributed by Arg173. Mg(2+) contacts are provided by Asp232 and Glu233.

This sequence belongs to the anthranilate phosphoribosyltransferase family. In terms of assembly, homodimer. It depends on Mg(2+) as a cofactor.

It carries out the reaction N-(5-phospho-beta-D-ribosyl)anthranilate + diphosphate = 5-phospho-alpha-D-ribose 1-diphosphate + anthranilate. The protein operates within amino-acid biosynthesis; L-tryptophan biosynthesis; L-tryptophan from chorismate: step 2/5. Catalyzes the transfer of the phosphoribosyl group of 5-phosphorylribose-1-pyrophosphate (PRPP) to anthranilate to yield N-(5'-phosphoribosyl)-anthranilate (PRA). This is Anthranilate phosphoribosyltransferase from Aeropyrum pernix (strain ATCC 700893 / DSM 11879 / JCM 9820 / NBRC 100138 / K1).